Reading from the N-terminus, the 610-residue chain is Zinc metalloproteinase-disintegrin-like 3a (610 aa).

The first 19 residues, 1–19 (MIQVLLVTILAVFPYQGSS), serve as a signal peptide directing secretion. Residues 20 to 188 (IILGSGNVND…KKASQLVVTA (169 aa)) constitute a propeptide that is removed on maturation. Positions 198-394 (RYVELVIVAD…YTPKCILNEP (197 aa)) constitute a Peptidase M12B domain. Glu-201 is a Ca(2+) binding site. N-linked (GlcNAc...) asparagine glycosylation occurs at Asn-217. Asp-285 contributes to the Ca(2+) binding site. 3 disulfides stabilise this stretch: Cys-309-Cys-389, Cys-349-Cys-373, and Cys-351-Cys-356. His-334 provides a ligand contact to Zn(2+). Glu-335 is a catalytic residue. Zn(2+) is bound by residues His-338 and His-344. The Ca(2+) site is built by Cys-389, Asn-392, Val-404, Asn-407, Glu-411, Glu-414, and Asp-417. Positions 402–488 (PPVCGNELLE…DCPTDDFHKN (87 aa)) constitute a Disintegrin domain. Intrachain disulfides connect Cys-405/Cys-434, Cys-416/Cys-429, Cys-418/Cys-424, Cys-428/Cys-451, Cys-442/Cys-448, Cys-447/Cys-473, Cys-460/Cys-480, Cys-467/Cys-499, Cys-492/Cys-504, Cys-511/Cys-561, Cys-526/Cys-572, Cys-539/Cys-549, Cys-556/Cys-598, and Cys-592/Cys-603. Residues 466-468 (ECD) carry the D/ECD-tripeptide motif.

The protein belongs to the venom metalloproteinase (M12B) family. P-III subfamily. The cofactor is Zn(2+). Expressed by the venom gland.

The protein resides in the secreted. Snake venom metalloproteinase that impairs hemostasis in the envenomed animal. In Crotalus adamanteus (Eastern diamondback rattlesnake), this protein is Zinc metalloproteinase-disintegrin-like 3a.